Reading from the N-terminus, the 143-residue chain is Host transcription reprogramming factor 8 (143 aa).

Residues 1–19 form the signal peptide; that stretch reads MHTYKFIQIALLFASVALA. Positions 24–34 are enriched in pro residues; that stretch reads PSPPNPPPVPQ. The disordered stretch occupies residues 24–43; that stretch reads PSPPNPPPVPQLPNSETKSN. Residues 48-71 form a C2H2-type 1 zinc finger; the sequence is HSCEFCGVVKPSGPAYLEHYHQNH. A disordered region spans residues 77–99; sequence GKLATPSPPNPPPVPTQKVETHA. The span at 82-91 shows a compositional bias: pro residues; that stretch reads PSPPNPPPVP. The C2H2-type 2 zinc finger occupies 103-126; sequence HGCEWCNKVEPSGPAYIKHYKENH.

It is found in the secreted. The protein resides in the host nucleus. Functionally, probable secreted effector that translocates into the nuclei of host cells to reprogram the expression of targeted genes by binding on effector binding elements in rice. The chain is Host transcription reprogramming factor 8 from Pyricularia oryzae (strain 70-15 / ATCC MYA-4617 / FGSC 8958) (Rice blast fungus).